We begin with the raw amino-acid sequence, 1563 residues long: Pentafunctional AROM polypeptide (1563 aa).

Residues 1–382 form a 3-dehydroquinate synthase region; that stretch reads MAESSSNPTR…YEPKASVVED (382 aa). NAD(+) contacts are provided by residues 48–50, 82–85, 113–115, and Asp-118; these read DTN, EYSK, and GGV. Residue Arg-129 participates in 7-phospho-2-dehydro-3-deoxy-D-arabino-heptonate binding. An NAD(+)-binding site is contributed by 138–139; that stretch reads TT. 7-phospho-2-dehydro-3-deoxy-D-arabino-heptonate is bound by residues Asp-145 and Lys-151. Lys-160 provides a ligand contact to NAD(+). Asn-161 is a binding site for 7-phospho-2-dehydro-3-deoxy-D-arabino-heptonate. Residues 178 to 181 and Asn-189 contribute to the NAD(+) site; that span reads FLNT. Glu-193 contacts Zn(2+). 7-phospho-2-dehydro-3-deoxy-D-arabino-heptonate is bound by residues 193–196 and Lys-248; that span reads EVIK. Glu-258 functions as the Proton acceptor; for 3-dehydroquinate synthase activity in the catalytic mechanism. 7-phospho-2-dehydro-3-deoxy-D-arabino-heptonate is bound by residues 262–266 and His-269; that span reads RNLLN. His-269 serves as a coordination point for Zn(2+). The Proton acceptor; for 3-dehydroquinate synthase activity role is filled by His-273. 7-phospho-2-dehydro-3-deoxy-D-arabino-heptonate is bound by residues His-285 and Lys-354. His-285 contacts Zn(2+). The tract at residues 395 to 834 is EPSP synthase; that stretch reads VHAGVPKDLK…WDTMSNYFKS (440 aa). Cys-816 acts as the For EPSP synthase activity in catalysis. A compositionally biased stretch (basic and acidic residues) spans 836 to 850; sequence LEGEEEPHSSHVSHE. The interval 836–857 is disordered; the sequence is LEGEEEPHSSHVSHEKPRKGNP. The segment at 857 to 1051 is shikimate kinase; that stretch reads PKSIFIIGMR…KKKPQSSFVS (195 aa). 864–871 is an ATP binding site; the sequence is GMRGAGKS. Residues 1052–1265 form a 3-dehydroquinase region; sequence LTVPNVSKAL…AAPGQLSAAE (214 aa). His-1168 functions as the Proton acceptor; for 3-dehydroquinate dehydratase activity in the catalytic mechanism. Lys-1196 serves as the catalytic Schiff-base intermediate with substrate; for 3-dehydroquinate dehydratase activity. Residues 1278–1563 form a shikimate dehydrogenase region; sequence PRSFYLFGKP…TDAQAAVMGN (286 aa).

The protein in the N-terminal section; belongs to the sugar phosphate cyclases superfamily. Dehydroquinate synthase family. This sequence in the 2nd section; belongs to the EPSP synthase family. In the 3rd section; belongs to the shikimate kinase family. It in the 4th section; belongs to the type-I 3-dehydroquinase family. The protein in the C-terminal section; belongs to the shikimate dehydrogenase family. As to quaternary structure, homodimer. Zn(2+) is required as a cofactor.

The protein resides in the cytoplasm. It carries out the reaction 7-phospho-2-dehydro-3-deoxy-D-arabino-heptonate = 3-dehydroquinate + phosphate. It catalyses the reaction 3-dehydroquinate = 3-dehydroshikimate + H2O. The enzyme catalyses shikimate + NADP(+) = 3-dehydroshikimate + NADPH + H(+). The catalysed reaction is shikimate + ATP = 3-phosphoshikimate + ADP + H(+). It carries out the reaction 3-phosphoshikimate + phosphoenolpyruvate = 5-O-(1-carboxyvinyl)-3-phosphoshikimate + phosphate. It functions in the pathway metabolic intermediate biosynthesis; chorismate biosynthesis; chorismate from D-erythrose 4-phosphate and phosphoenolpyruvate: step 2/7. The protein operates within metabolic intermediate biosynthesis; chorismate biosynthesis; chorismate from D-erythrose 4-phosphate and phosphoenolpyruvate: step 3/7. Its pathway is metabolic intermediate biosynthesis; chorismate biosynthesis; chorismate from D-erythrose 4-phosphate and phosphoenolpyruvate: step 4/7. It participates in metabolic intermediate biosynthesis; chorismate biosynthesis; chorismate from D-erythrose 4-phosphate and phosphoenolpyruvate: step 5/7. It functions in the pathway metabolic intermediate biosynthesis; chorismate biosynthesis; chorismate from D-erythrose 4-phosphate and phosphoenolpyruvate: step 6/7. The AROM polypeptide catalyzes 5 consecutive enzymatic reactions in prechorismate polyaromatic amino acid biosynthesis. This is Pentafunctional AROM polypeptide from Sordaria macrospora (strain ATCC MYA-333 / DSM 997 / K(L3346) / K-hell).